The chain runs to 133 residues: Magnetosome protein MamC (133 aa).

Residues 1–5 (MAAFN) lie on the Cytoplasmic side of the membrane. The helical transmembrane segment at 6–26 (LALYLSKSIPGVGVLGGVIGG) threads the bilayer. The Lumenal segment spans residues 27 to 67 (SAALAKNLKAKQRGEITTEEAVIDTGKEALGAGLATTVSAY). Positions 37-57 (KQRGEITTEEAVIDTGKEALG) are magnetite interacting component (MIC) binds magnetite. The chain crosses the membrane as a helical span at residues 68–88 (AAGVVGGGLVVSLGTAFAVAV). Residues 89-133 (AGKYAWDYGMEQMEAKLQEKKHQEQGGQTYGDNPDPFDPQELETP) lie on the Cytoplasmic side of the membrane. The interval 105–133 (LQEKKHQEQGGQTYGDNPDPFDPQELETP) is disordered.

This sequence belongs to the magnetosome MamC family. In terms of assembly, probably interacts with MamA.

The protein localises to the magnetosome membrane. Probably helps control the size of magnetite crystals; in vitro synthesis of magnetite yields larger and more well-developed magnetite crystals in the presence of purified MamC. Binds Fe(3+). The lumenal domain probably binds magnetite crystals, affecting crystal size and shape. Purified MamC self-assembles into micelles in the presence of ferric chloride hexahydrate (FeCl(3).6H(2)O); both oxygen and iron are present in the proteinaceous micelles. Whether this is relevant in vivo is unknown. This Magnetococcus marinus (strain ATCC BAA-1437 / JCM 17883 / MC-1) protein is Magnetosome protein MamC.